The chain runs to 197 residues: Guanylate kinase (197 aa).

The Guanylate kinase-like domain occupies 7 to 185 (GLIIILSSPS…TLKKIHEIIV (179 aa)). 14–21 (SPSGTGKS) contacts ATP.

This sequence belongs to the guanylate kinase family.

It is found in the cytoplasm. It carries out the reaction GMP + ATP = GDP + ADP. Functionally, essential for recycling GMP and indirectly, cGMP. The chain is Guanylate kinase (gmk) from Rickettsia prowazekii (strain Madrid E).